Here is a 293-residue protein sequence, read N- to C-terminus: tRNA(His) guanylyltransferase (293 aa).

Residues D29, G30, and D76 each coordinate Mg(2+). GTP is bound by residues D29 to T34 and S75 to D76. The disordered stretch occupies residues K226–K252.

Belongs to the tRNA(His) guanylyltransferase family. Mg(2+) is required as a cofactor.

It carries out the reaction a 5'-end ribonucleotide-tRNA(His) + GTP + ATP + H2O = a 5'-end phospho-guanosine-ribonucleotide-tRNA(His) + AMP + 2 diphosphate + H(+). Its function is as follows. Adds a GMP to the 5'-end of tRNA(His) after transcription and RNase P cleavage. This chain is tRNA(His) guanylyltransferase (rgt-1), found in Neurospora crassa (strain ATCC 24698 / 74-OR23-1A / CBS 708.71 / DSM 1257 / FGSC 987).